Consider the following 660-residue polypeptide: tRNA 5-methylaminomethyl-2-thiouridine biosynthesis bifunctional protein MnmC (660 aa).

The interval 1–242 (MTDRIVPATL…KRAMLVGEFA (242 aa)) is tRNA (mnm(5)s(2)U34)-methyltransferase. The tract at residues 266–660 (IGAGLAGCAV…VRALRHGRVA (395 aa)) is FAD-dependent cmnm(5)s(2)U34 oxidoreductase.

It in the N-terminal section; belongs to the methyltransferase superfamily. tRNA (mnm(5)s(2)U34)-methyltransferase family. This sequence in the C-terminal section; belongs to the DAO family. It depends on FAD as a cofactor.

The protein resides in the cytoplasm. The enzyme catalyses 5-aminomethyl-2-thiouridine(34) in tRNA + S-adenosyl-L-methionine = 5-methylaminomethyl-2-thiouridine(34) in tRNA + S-adenosyl-L-homocysteine + H(+). Functionally, catalyzes the last two steps in the biosynthesis of 5-methylaminomethyl-2-thiouridine (mnm(5)s(2)U) at the wobble position (U34) in tRNA. Catalyzes the FAD-dependent demodification of cmnm(5)s(2)U34 to nm(5)s(2)U34, followed by the transfer of a methyl group from S-adenosyl-L-methionine to nm(5)s(2)U34, to form mnm(5)s(2)U34. The sequence is that of tRNA 5-methylaminomethyl-2-thiouridine biosynthesis bifunctional protein MnmC from Burkholderia pseudomallei (strain 1710b).